A 373-amino-acid chain; its full sequence is Queuine tRNA-ribosyltransferase (373 aa).

Catalysis depends on Asp-90, which acts as the Proton acceptor. Residues 90–94 (DSGGF), Asp-144, Gln-193, and Gly-220 each bind substrate. Residues 251-257 (GVGTPED) are RNA binding. Catalysis depends on Asp-270, which acts as the Nucleophile. The segment at 275–279 (TRNAR) is RNA binding; important for wobble base 34 recognition. Zn(2+) contacts are provided by Cys-308, Cys-310, Cys-313, and His-339.

The protein belongs to the queuine tRNA-ribosyltransferase family. In terms of assembly, homodimer. Within each dimer, one monomer is responsible for RNA recognition and catalysis, while the other monomer binds to the replacement base PreQ1. Requires Zn(2+) as cofactor.

It carries out the reaction 7-aminomethyl-7-carbaguanine + guanosine(34) in tRNA = 7-aminomethyl-7-carbaguanosine(34) in tRNA + guanine. It functions in the pathway tRNA modification; tRNA-queuosine biosynthesis. Functionally, catalyzes the base-exchange of a guanine (G) residue with the queuine precursor 7-aminomethyl-7-deazaguanine (PreQ1) at position 34 (anticodon wobble position) in tRNAs with GU(N) anticodons (tRNA-Asp, -Asn, -His and -Tyr). Catalysis occurs through a double-displacement mechanism. The nucleophile active site attacks the C1' of nucleotide 34 to detach the guanine base from the RNA, forming a covalent enzyme-RNA intermediate. The proton acceptor active site deprotonates the incoming PreQ1, allowing a nucleophilic attack on the C1' of the ribose to form the product. After dissociation, two additional enzymatic reactions on the tRNA convert PreQ1 to queuine (Q), resulting in the hypermodified nucleoside queuosine (7-(((4,5-cis-dihydroxy-2-cyclopenten-1-yl)amino)methyl)-7-deazaguanosine). The sequence is that of Queuine tRNA-ribosyltransferase from Campylobacter jejuni subsp. jejuni serotype O:2 (strain ATCC 700819 / NCTC 11168).